We begin with the raw amino-acid sequence, 467 residues long: Colanic acid biosynthesis protein WcaM (467 aa).

Its pathway is slime biogenesis; slime polysaccharide biosynthesis. This chain is Colanic acid biosynthesis protein WcaM (wcaM), found in Salmonella typhimurium (strain LT2 / SGSC1412 / ATCC 700720).